Consider the following 1161-residue polypeptide: Nardilysin (1161 aa).

An N-terminal signal peptide occupies residues 1 to 18 (MLRRVAVAAVCVTGRKLR). Disordered regions lie at residues 49–103 (MPGR…IIKS) and 130–218 (VEGK…KKTT). Serine 85, serine 91, and serine 93 each carry phosphoserine. Residues 138–209 (TDEEEEEEEE…EENELEELEE (72 aa)) show a composition bias toward acidic residues. Histidine 244 serves as a coordination point for Zn(2+). Glutamate 247 (proton acceptor) is an active-site residue. Positions 248 and 325 each coordinate Zn(2+).

The protein belongs to the peptidase M16 family. Interacts with BACE1 and NRG1. Zn(2+) serves as cofactor. Highly expressed in brain of early postnatal mice but expressed at a lower level in the brains of adult mice. Expression is high in cortical neurons, and lower in neurons in the striatum. Very low expression detected in the corpus callosum. Also expressed in the gray matter in spinal cord and dorsal root ganglia.

Its subcellular location is the mitochondrion. The protein resides in the cell projection. It localises to the dendrite. The catalysed reaction is Hydrolysis of polypeptides, preferably at -Xaa-|-Arg-Lys-, and less commonly at -Arg-|-Arg-Xaa-, in which Xaa is not Arg or Lys.. Its function is as follows. Cleaves peptide substrates on the N-terminus of arginine residues in dibasic pairs. Is a critical activator of BACE1- and ADAM17-mediated pro-neuregulin ectodomain shedding, involved in the positive regulation of axonal maturation and myelination. Required for proper functioning of 2-oxoglutarate dehydrogenase (OGDH). In Mus musculus (Mouse), this protein is Nardilysin.